Consider the following 279-residue polypeptide: 3-methyl-2-oxobutanoate hydroxymethyltransferase (279 aa).

Residues aspartate 43 and aspartate 82 each contribute to the Mg(2+) site. Residues 43–44 (DS), aspartate 82, and lysine 112 contribute to the 3-methyl-2-oxobutanoate site. Glutamate 114 lines the Mg(2+) pocket. The active-site Proton acceptor is the glutamate 181.

The protein belongs to the PanB family. In terms of assembly, homodecamer; pentamer of dimers. Mg(2+) is required as a cofactor.

It is found in the cytoplasm. It carries out the reaction 3-methyl-2-oxobutanoate + (6R)-5,10-methylene-5,6,7,8-tetrahydrofolate + H2O = 2-dehydropantoate + (6S)-5,6,7,8-tetrahydrofolate. It participates in cofactor biosynthesis; (R)-pantothenate biosynthesis; (R)-pantoate from 3-methyl-2-oxobutanoate: step 1/2. In terms of biological role, catalyzes the reversible reaction in which hydroxymethyl group from 5,10-methylenetetrahydrofolate is transferred onto alpha-ketoisovalerate to form ketopantoate. The polypeptide is 3-methyl-2-oxobutanoate hydroxymethyltransferase (Halalkalibacterium halodurans (strain ATCC BAA-125 / DSM 18197 / FERM 7344 / JCM 9153 / C-125) (Bacillus halodurans)).